The following is a 336-amino-acid chain: Phosphate acyltransferase (336 aa).

It belongs to the PlsX family. As to quaternary structure, homodimer. Probably interacts with PlsY.

Its subcellular location is the cytoplasm. It catalyses the reaction a fatty acyl-[ACP] + phosphate = an acyl phosphate + holo-[ACP]. The protein operates within lipid metabolism; phospholipid metabolism. In terms of biological role, catalyzes the reversible formation of acyl-phosphate (acyl-PO(4)) from acyl-[acyl-carrier-protein] (acyl-ACP). This enzyme utilizes acyl-ACP as fatty acyl donor, but not acyl-CoA. In Pseudomonas fluorescens (strain ATCC BAA-477 / NRRL B-23932 / Pf-5), this protein is Phosphate acyltransferase.